The following is a 96-amino-acid chain: Pyrimidine/purine nucleoside phosphorylase (96 aa).

Belongs to the nucleoside phosphorylase PpnP family.

The catalysed reaction is a purine D-ribonucleoside + phosphate = a purine nucleobase + alpha-D-ribose 1-phosphate. It carries out the reaction adenosine + phosphate = alpha-D-ribose 1-phosphate + adenine. The enzyme catalyses cytidine + phosphate = cytosine + alpha-D-ribose 1-phosphate. It catalyses the reaction guanosine + phosphate = alpha-D-ribose 1-phosphate + guanine. The catalysed reaction is inosine + phosphate = alpha-D-ribose 1-phosphate + hypoxanthine. It carries out the reaction thymidine + phosphate = 2-deoxy-alpha-D-ribose 1-phosphate + thymine. The enzyme catalyses uridine + phosphate = alpha-D-ribose 1-phosphate + uracil. It catalyses the reaction xanthosine + phosphate = alpha-D-ribose 1-phosphate + xanthine. In terms of biological role, catalyzes the phosphorolysis of diverse nucleosides, yielding D-ribose 1-phosphate and the respective free bases. Can use uridine, adenosine, guanosine, cytidine, thymidine, inosine and xanthosine as substrates. Also catalyzes the reverse reactions. The chain is Pyrimidine/purine nucleoside phosphorylase from Erwinia tasmaniensis (strain DSM 17950 / CFBP 7177 / CIP 109463 / NCPPB 4357 / Et1/99).